Here is a 344-residue protein sequence, read N- to C-terminus: Protein L-Myc-1-B (344 aa).

Composition is skewed to polar residues over residues 104–113 (GSPRVTNTQK) and 213–223 (NTMSPQHNFHS). 2 disordered regions span residues 104–162 (GSPR…EDEI) and 208–271 (LPPE…YLER). The segment covering 259 to 270 (DLAKRKNHNYLE) has biased composition (basic and acidic residues). In terms of domain architecture, bHLH spans 261–313 (AKRKNHNYLERKRRNDLRSRFLALREEVPSLSRSTKTPKVVVLSKATEFLKGL). Residues 313–341 (LVIQEQQLTAEKLKLWSRHQQLLRRISQL) are leucine-zipper.

As to quaternary structure, efficient DNA binding requires dimerization with another bHLH protein. Binds DNA as a heterodimer with MAX. High levels in oocytes, modest levels in kidney and low levels in spleen.

The protein localises to the nucleus. In Xenopus laevis (African clawed frog), this protein is Protein L-Myc-1-B (mycl1-b).